Consider the following 207-residue polypeptide: Ribosome maturation factor RimM (207 aa).

Residues 114–207 form the PRC barrel domain; that stretch reads DDEYYWVDLI…RIDSDWPLDY (94 aa).

It belongs to the RimM family. As to quaternary structure, binds ribosomal protein uS19.

Its subcellular location is the cytoplasm. An accessory protein needed during the final step in the assembly of 30S ribosomal subunit, possibly for assembly of the head region. Essential for efficient processing of 16S rRNA. May be needed both before and after RbfA during the maturation of 16S rRNA. It has affinity for free ribosomal 30S subunits but not for 70S ribosomes. This is Ribosome maturation factor RimM from Bordetella pertussis (strain Tohama I / ATCC BAA-589 / NCTC 13251).